The primary structure comprises 230 residues: Large ribosomal subunit protein uL1 (230 aa).

Belongs to the universal ribosomal protein uL1 family. Part of the 50S ribosomal subunit.

In terms of biological role, binds directly to 23S rRNA. The L1 stalk is quite mobile in the ribosome, and is involved in E site tRNA release. Its function is as follows. Protein L1 is also a translational repressor protein, it controls the translation of the L11 operon by binding to its mRNA. This Bacillus cereus (strain G9842) protein is Large ribosomal subunit protein uL1.